Reading from the N-terminus, the 720-residue chain is Engulfment and cell motility protein 2 (720 aa).

Tyr48 bears the Phosphotyrosine mark. The 175-residue stretch at 310–484 (QAQRDIIFEL…QVVREQITRA (175 aa)) folds into the ELMO domain. Position 503 is a phosphoserine (Ser503). The PH domain occupies 553–674 (SSFRKIGNRR…LLGKDMSSEL (122 aa)). An SH3-binding motif is present at residues 700–707 (PEAPPPVP). Position 717 is a phosphotyrosine (Tyr717).

As to quaternary structure, interacts directly with the SH3-domain of DOCK1 via its SH3-binding site. Probably forms a heterotrimeric complex with DOCK1 and RAC1. Interacts with ARHGEF16, DOCK4 and EPHA2; mediates activation of RAC1 by EPHA2. Interacts with ADGRB3. Interacts with AUTS2; the interaction is direct.

The protein resides in the cytoplasm. The protein localises to the cytosol. It localises to the membrane. Involved in cytoskeletal rearrangements required for phagocytosis of apoptotic cells and cell motility. Acts in association with DOCK1 and CRK. Was initially proposed to be required in complex with DOCK1 to activate Rac Rho small GTPases. May enhance the guanine nucleotide exchange factor (GEF) activity of DOCK1. The sequence is that of Engulfment and cell motility protein 2 (ELMO2) from Bos taurus (Bovine).